A 245-amino-acid polypeptide reads, in one-letter code: Protein crossbronx (245 aa).

The region spanning 20 to 177 (QQEYKILAEY…VQESIVESKS (158 aa)) is the UBC core domain.

Belongs to the ubiquitin-conjugating enzyme family. FTS subfamily.

The sequence is that of Protein crossbronx (cbx) from Drosophila virilis (Fruit fly).